Reading from the N-terminus, the 526-residue chain is MWFVLYIFLALPLLLVAYLELSTFRRRRVLNKFNGPRGLPLMGNAHQMGKNPSEILDTVFSWWHQYGKDNFVFWIGTYSNVLVTSSKYLEFILSSQTLITKSDIYQLTHPWLGLGLLTSTGSKWHKHRKMITPAFHFNILQDFHEVMNENSTKFIKHLKTVAAGDNIFDFQEQAHYLTLDVICDTAMGVSINAMENRSSSIVQAFKDMCYNINMRAFHPLKRNELLYRLAPDYPAYSRTLKTLQDFTNEIIAKRIEAHKSGAVSTNAGDEFTRKKMAFLDTLLSSTIDGRPLNSKELYEEVSTFMFEGHDTTTSGVSFAVYLLSRHQDEQRKLFKEQREVMGNSELGRDATFQEISQMKYLDLFIKEAQRVYPSVPFIGRFTEKDYVIDGDLVPKGTTLNLGLVMLGYNEKVFKDPHKFRPERFELEKPGPFEYVPFSAGPRNCIGQKFALLEIKTVVSKIIRNFEVLPALDELVSKDGYISTTIGLPDAERKKRDPYRHKYDPILSAVLTLKSENGLYIRLKERH.

2 residues coordinate heme: Glu-307 and Cys-444.

Belongs to the cytochrome P450 family. It depends on heme as a cofactor.

The protein localises to the endoplasmic reticulum membrane. It localises to the microsome membrane. In terms of biological role, may be involved in the metabolism of insect hormones and in the breakdown of synthetic insecticides. The sequence is that of Cytochrome P450 4e2 (Cyp4e2) from Drosophila melanogaster (Fruit fly).